The sequence spans 208 residues: Proheparin-binding EGF-like growth factor (208 aa).

Residues 1 to 19 (MKLLPSVVLKLLLAAVLSA) form the signal peptide. A propeptide spanning residues 20 to 62 (LVTGESLEQLRRGLAAGTSNPDPSTGSTDQLLRLGGGRDRKVR) is cleaved from the precursor. The Extracellular segment spans residues 20–160 (LVTGESLEQL…ENRLYTYDHT (141 aa)). The disordered stretch occupies residues 34–55 (AAGTSNPDPSTGSTDQLLRLGG). The segment covering 36–49 (GTSNPDPSTGSTDQ) has biased composition (polar residues). Thr-75 and Thr-85 each carry an O-linked (GalNAc...) threonine glycan. A disordered region spans residues 81–104 (QALATPSKEEHGKRKKKGKGLGKK). Basic residues predominate over residues 93-102 (KRKKKGKGLG). The region spanning 104–144 (KRDPCLRKYKDFCIHGECKYVKELRAPSCICHPGYHGERCH) is the EGF-like domain. 3 cysteine pairs are disulfide-bonded: Cys-108–Cys-121, Cys-116–Cys-132, and Cys-134–Cys-143. The segment at 136–148 (PGYHGERCHGLSL) is toxin-binding domain. Residues 149 to 208 (PVENRLYTYDHTTILAVVAVVLSSVCLLVIVGLLMFRYHRRGGYDVENEEKVKLGMTNSH) constitute a propeptide, C-terminal. Residues 161-184 (TILAVVAVVLSSVCLLVIVGLLMF) form a helical membrane-spanning segment. Residues 185 to 208 (RYHRRGGYDVENEEKVKLGMTNSH) are Cytoplasmic-facing.

Interacts with EGFR and ERBB4. Interacts with FBLN1. In terms of processing, O-glycosylated.

The protein localises to the secreted. It localises to the extracellular space. The protein resides in the cell membrane. Growth factor that mediates its effects via EGFR, ERBB2 and ERBB4. Required for normal cardiac valve formation and normal heart function. Promotes smooth muscle cell proliferation. May be involved in macrophage-mediated cellular proliferation. It is mitogenic for fibroblasts, but not endothelial cells. It is able to bind EGF receptor/EGFR with higher affinity than EGF itself and is a far more potent mitogen for smooth muscle cells than EGF. Also acts as a diphtheria toxin receptor. The sequence is that of Proheparin-binding EGF-like growth factor (HBEGF) from Chlorocebus aethiops (Green monkey).